The chain runs to 136 residues: Large-conductance mechanosensitive channel (136 aa).

Transmembrane regions (helical) follow at residues 10–30 (FAMR…AAFG) and 76–96 (GVFI…FMAI).

Belongs to the MscL family. As to quaternary structure, homopentamer.

The protein resides in the cell inner membrane. Its function is as follows. Channel that opens in response to stretch forces in the membrane lipid bilayer. May participate in the regulation of osmotic pressure changes within the cell. The sequence is that of Large-conductance mechanosensitive channel from Escherichia coli O127:H6 (strain E2348/69 / EPEC).